Consider the following 237-residue polypeptide: MPVKKKRKAPGVAAAVAEDAGLKKCKIPSYCRSQPPARLISGEEDFSRKKCLAWFYEYAGPDEVVGPEGMEKFCEDIGVEPENIIMLVLAWKLEAESMGFFTKEEWLKGMTSLQCDCTEKLQSRFDFLRSQLNDISSFKNIYRYAFDFARDKDQRSLDIDTAKSMLALLLGRTWPLFSVFYQYLEQSKYRVMNKDQWYNVLEFSRTVHADLSNYDEDGAWPVLLDEFVEWQKIRQTS.

Position 41 is a phosphoserine; by IKKA (Ser-41). A DCUN1 domain is found at 46–232 (FSRKKCLAWF…LLDEFVEWQK (187 aa)).

Part of a complex that contains DCUN1D5, CUL1 and RBX1; this interaction is bridged by CUL1. Interacts (via the DCUN1 domain) with the unneddylated cullins: interacts with CUL1, CUL2, CUL3, CUL4A, CUL4B and CUL5; these interactions promote the cullin neddylation and the identity of the cullin dictates the affinity of the interaction. Interacts (via DCUN1 domain) with UBE2M (N-terminally acetylated form) and probably with UBE2F (N-terminally acetylated form). May also interact with regulators or subunits of cullin-RING ligases such as RBX1, RNF7, ELOB and DDB1; these interactions are bridged by cullins. Interacts with CAND1; this interaction is bridged by cullins and strongly inhibits the neddylation of cullins. These CAND-cullin-DCNL complexes can only be neddylated in the presence of a substrate adapter. Post-translationally, phosphorylation at Ser-41 is independent of cullin's interaction. Phosphorylated in response to both TICAM1 and MYD88 dependent Toll-like receptor (TLR) pathway activation. Phosphorylated in response to IL1B stimulation. As to expression, highly expressed in testis. Lower levels of expression in skin, thymus, spleen, lymph nodes, lung, brain, heart, skeletal muscles, kidney, liver an ovary.

The protein resides in the nucleus. Its subcellular location is the cytoplasm. The protein localises to the cytoskeleton. It is found in the spindle. Functionally, contributes to the neddylation of all cullins by transferring NEDD8 from N-terminally acetylated NEDD8-conjugating E2s enzyme to different cullin C-terminal domain-RBX complexes which is necessary for the activation of cullin-RING E3 ubiquitin ligases (CRLs). May play a role in DNA damage response and may participate in cell proliferation and anchorage-independent cell growth. This Mus musculus (Mouse) protein is DCN1-like protein 5.